Consider the following 318-residue polypeptide: Aspartate carbamoyltransferase catalytic subunit (318 aa).

Residues R67 and T68 each contribute to the carbamoyl phosphate site. K95 contacts L-aspartate. 3 residues coordinate carbamoyl phosphate: R117, H145, and Q148. The L-aspartate site is built by R178 and R236. Residues G277 and P278 each coordinate carbamoyl phosphate.

It belongs to the aspartate/ornithine carbamoyltransferase superfamily. ATCase family. As to quaternary structure, heterododecamer (2C3:3R2) of six catalytic PyrB chains organized as two trimers (C3), and six regulatory PyrI chains organized as three dimers (R2).

The catalysed reaction is carbamoyl phosphate + L-aspartate = N-carbamoyl-L-aspartate + phosphate + H(+). The protein operates within pyrimidine metabolism; UMP biosynthesis via de novo pathway; (S)-dihydroorotate from bicarbonate: step 2/3. In terms of biological role, catalyzes the condensation of carbamoyl phosphate and aspartate to form carbamoyl aspartate and inorganic phosphate, the committed step in the de novo pyrimidine nucleotide biosynthesis pathway. This is Aspartate carbamoyltransferase catalytic subunit from Roseiflexus sp. (strain RS-1).